Consider the following 1894-residue polypeptide: Adenylate kinase 9 (1894 aa).

The segment at 32-286 is adenylate kinase 1; that stretch reads TCFIIFGKPG…LFMTVIERLK (255 aa). An ATP-binding site is contributed by 41–46; the sequence is GAGKTT. The segment at 61-90 is NMP 1; that stretch reads EALSVLEEHIAAEKETGAMLQSLLVSGHSI. 117 to 120 is an AMP binding site; that stretch reads EMPS. The tract at residues 161–206 is LID 1; it reads GQRQHSTTGYVYTREQWDPEIIESRRRKKRDFPKEGKSEEEEEEEE. The segment at 188 to 211 is disordered; sequence KKRDFPKEGKSEEEEEEEEQEEEE. A compositionally biased stretch (acidic residues) spans 198–211; the sequence is SEEEEEEEEQEEEE. AMP is bound at residue arginine 230. A coiled-coil region spans residues 451–478; it reads IKVVQQRLLNEKQAKQQEERTLKELQVQ. The tract at residues 492–533 is disordered; sequence SEELPSLENTGSKLSSLEIGQEDKSKSETTITGDQVKDVSTE. Residues 651 to 691 are a coiled coil; sequence LERLQEEAQAKKREEEEIRKVKEEELRLEEEKQRLMELATK. Disordered stretches follow at residues 710–789 and 876–911; these read PYPD…LGSE and EEEA…EKRR. Positions 715-736 are enriched in acidic residues; the sequence is PDNEAEEEVEDSEIHEESEAQE. 2 stretches are compositionally biased toward basic and acidic residues: residues 757–768 and 777–789; these read EGDHEPEAEFKP and ETEK…LGSE. Acidic residues predominate over residues 876 to 903; it reads EEEAEDYQAETEIDEEQEEEEEEEEEGE. Positions 976–1187 are adenylate kinase 2; that stretch reads LRICLLGPHG…VAKRRAELIL (212 aa). Residue 985-990 participates in ATP binding; that stretch reads GSGKTV. Positions 1005 to 1036 are NMP 2; sequence QFDEFLQEKMLLKAERKFGPEFEDDSEEEQLV. AMP is bound by residues 1034–1036 and 1063–1066; these read QLV and VQLT. Residues 1108 to 1128 are LID 2; that stretch reads DGFPRHPEEAQFLGERGFFPD. Positions 1223–1241 are enriched in acidic residues; the sequence is EFPKDEEEMSEEDEEQEAD. The disordered stretch occupies residues 1223-1243; sequence EFPKDEEEMSEEDEEQEADAT. The adenylate kinase 3 stretch occupies residues 1395-1584; sequence VRIMIVGPPK…VWNEVLKDIQ (190 aa). Position 1404-1409 (1404-1409) interacts with ATP; that stretch reads KSGKTT. The tract at residues 1424–1455 is NMP 3; the sequence is SVGDALRGMLNNHPDSELSLMLNWHLHKGKTV. AMP is bound by residues arginine 1430, 1482–1485, and glutamine 1489; that span reads GYPV. Residues 1519 to 1533 are LID 3; sequence LEKKTEQSMSYPLHN.

Belongs to the adenylate kinase family. Highly expressed in the testis.

The protein localises to the cytoplasm. It localises to the nucleus. The protein resides in the cell projection. Its subcellular location is the cilium. It is found in the flagellum. The catalysed reaction is a ribonucleoside 5'-phosphate + ATP = a ribonucleoside 5'-diphosphate + ADP. It catalyses the reaction AMP + ATP = 2 ADP. The enzyme catalyses GTP + AMP = GDP + ADP. It carries out the reaction CMP + ATP = CDP + ADP. The catalysed reaction is GTP + CMP = CDP + GDP. It catalyses the reaction dAMP + ATP = dADP + ADP. The enzyme catalyses dCMP + ATP = dCDP + ADP. It carries out the reaction a ribonucleoside 5'-diphosphate + ATP = a ribonucleoside 5'-triphosphate + ADP. The catalysed reaction is CDP + ATP = CTP + ADP. It catalyses the reaction CDP + GTP = CTP + GDP. The enzyme catalyses GDP + ATP = GTP + ADP. It carries out the reaction UDP + ATP = UTP + ADP. The catalysed reaction is GTP + UDP = UTP + GDP. It catalyses the reaction dTDP + GTP = dTTP + GDP. The enzyme catalyses dCDP + ATP = dCTP + ADP. It carries out the reaction dCDP + GTP = dCTP + GDP. The catalysed reaction is dGDP + ATP = dGTP + ADP. It catalyses the reaction dTDP + ATP = dTTP + ADP. The enzyme catalyses dADP + GTP = dATP + GDP. Functionally, broad-specificity nucleoside phosphate kinase involved in cellular nucleotide homeostasis by catalyzing nucleoside-phosphate interconversions. Similar to other adenylate kinases, preferentially catalyzes the phosphorylation of the nucleoside monophosphate AMP with ATP as phosphate donor to produce ADP. In vitro, can also catalyze the phosphorylation of CMP, dAMP and dCMP and use GTP as an alternate phosphate donor. Moreover, exhibits a diphosphate kinase activity, producing ATP, CTP, GTP, UTP, TTP, dATP, dCTP and dGTP from the corresponding diphosphate substrates with either ATP or GTP as phosphate donors. For this activity shows the following substrate preference CDP &gt; UDP &gt; ADP &gt; TDP. The polypeptide is Adenylate kinase 9 (Mus musculus (Mouse)).